The following is a 501-amino-acid chain: TNF receptor-associated factor 2 (501 aa).

Residue alanine 2 is modified to N-acetylalanine. Phosphoserine is present on serine 5. Threonine 7 is subject to Phosphothreonine. Serine 11 bears the Phosphoserine mark. A Phosphothreonine modification is found at threonine 22. Residue lysine 31 forms a Glycyl lysine isopeptide (Lys-Gly) (interchain with G-Cter in ubiquitin) linkage. The segment at 34 to 73 (CSACRNVLRRPFQAQCGHRYCSFCLASILSSGPQNCAACV) adopts an RING-type zinc-finger fold. Residue threonine 117 is modified to Phosphothreonine; by PKC. 2 consecutive TRAF-type zinc fingers follow at residues 124–180 (CHEG…AHHE) and 177–233 (AHHE…EKQQ). Residues 283 to 293 (ENIVCVLNREV) are important for interaction with BIRC2 and BIRC3. Positions 299–348 (TAEACSRQHRLDQDKIEALSSKVQQLERSIGLKDLAMADLEQKVLEMEAS) form a coiled coil. Lysine 320 is covalently cross-linked (Glycyl lysine isopeptide (Lys-Gly) (interchain with G-Cter in ubiquitin)). Residues 351-496 (DGVFIWKISD…DDAIFIKAIV (146 aa)) form the MATH domain.

It belongs to the TNF receptor-associated factor family. A subfamily. In terms of assembly, homotrimer. Heterotrimer with TRAF1. Heterotrimer with TRAF3 (via TRAF domain). The domain containing the RING-type and the first TRAF-type zinc finger can also form homodimers (in vitro). Interacts with TNFRSF1B/TNFR2. Interacts with TNFRSF5/CD40. Interacts with TNFRSF4, TNFRSF7/CD27, TNFRSF8/CD30, TNFRSF9/CD137, TNFRSF11A/RANK, TNFRSF13B/TACI, TNFRSF14, TNFRSF16/NGFR, TNFRSF17/BCMA, TNFRSF18/AITR, TNFRSF19/TROY, TNFRSF19L/RELT and EDAR. Stimulation of TNF-alpha receptor TNFRSF1A leads to the formation of two distinct signaling complexes. Plasma membrane-bound complex I is composed of TNFRSF1A, TRADD, RIPK1, TRAF2 and BIRC2/c-IAP1 or BIRC3 which interacts with CHUCK/IKK-alpha, IKBKB/IKK-beta and IKBKG/IKK-gamma promoting cell survival. Subsequently, TRADD, RIPK1 and TRAF2 dissociate from TNFRSF1A and form cytoplasmic complex II with FADD and caspase CASP8 promoting cell apoptosis. Interacts with TRADD. Identified in a complex with TNFRSF1A, RIPK1 and IKBKB/IKK-beta. Interacts with RIPK2. Interacts with BIRC2 and BIRC3 N-terminus; a single BIRC2 or BIRC3 molecule interacts with a heterotrimer formed by TRAF1 and TRAF2, or a TRAF2 homotrimer. Identified in a complex composed of TRAF2, TRAF3, BIRC2 and BIRC3. Interacts with BIRC2; the interaction promotes BIRC2 stability. Interaction with BIRC2 and/or BIRC3 is essential for ubiquitination of IKBKE, degradation of NFKBIA and activation of NF-kappa-B. Within complex I, phosphorylated TRAF2 interacts (via 'Lys-63'-linked polyubiquitin chains) with CHUCK/IKK-alpha, IKBKB/IKK-beta, IKBKG/IKK-gamma TAB2, TAB3 and TAK1 in response to TNF-alpha stimulation. Within complex I, interacts with UXT isoform 1 (via TPQE motif); the interaction prevents the recruitment of FADD and CASP8/caspase 8 to complex I. Forms a complex composed of TNFRSF8/CD30 or TNFRSF1B/TNFR2, and TRAF1, TRAF2 and E3 ligase TRAIP. Within the complex, interacts with TRAIP; the interaction inhibits TRAF2-mediated NF-kappa B activation. Component of a complex composed of TANK and TBK1. Interacts with TRPC4AP. Interacts with MAP3K1/MEKK1, MAP3K5/ASK1 and MAP3K11/MLK3 in response to TNF-alpha stimulation; the interaction leads to JNK activation and interaction with MAP3K5 is inhibited by PRMT1. Component of a complex composed of MAP3K14/NIK BIRC3 and TRAF3; the interaction leads to BIRC2/3-mediated ubiquitination of TRAF3 upon CD40 engagement in a TRAF2-dependent manner. Interacts with MAP3K14/NIK in response to TNF-alpha stimulation; the interaction leads to NF-kappa B activation. Interacts with PEG3; the interaction may promote TRAF2-mediated NF-kappa B activation. Interacts with HIVEP3; the interaction may inhibit TNF-alpha-TRAF2-mediated NF-kappa B and JNK activation. Interacts with TANK/ITRAF; the interaction prevents interaction between TNFRSF1B/TNFR2 and TRAF2. Interacts with deubiquitinating enzyme CYLD; the interaction results in the deubiquitination and inactivation of TRAF2. Interacts with SIAH2; the interaction leads to TRAF2 ubiquitination and degradation. Interacts with E2 conjugating enzyme UBE2N/Ubc13, E3 ligase ITCH and RNF11 in response to TNF-alpha stimulation. Interacts with ubiquitin-editing enzyme TNFAIP3/A20 in response to TNF-alpha stimulation; the interaction promotes TRAF2 dissociation from UBE2N/Ubc13, ITCH, RNF11 and TAX1BP1 and prevents prolonged TRAF-2 ubiquitination. Interacts with TAX1BP1 in response to TNF-alpha stimulation; the interaction promotes TRAF2 dissociation from UBE2N/Ubc13 and TNFAIP3/A20, and prevents prolonged TRAF-2 ubiquitination. Interacts (via C-terminus) with EIF2AK2/PKR (via the kinase catalytic domain). Interacts with deubiquitinating enzyme USP48. Interacts with PTPN2; probably involved in TNF-mediated signaling. Interacts with Toll-like receptor TLR4/3 adapter TICAM1/TRIF; the interaction may promote TICAM1 ubiquitination. Interacts with kinase/endoribonuclease ERN1/IRE1 and DAB2IP in response to ER stress; the interaction requires DAB2IP. Interacts with ERN1/IRE1 and TAOK3 in response to ER stress; the interaction may promote TRAF2 phosphorylation. Interacts (via zinc fingers) with DAB2IP (via C-terminus PER domain)in response to TNF-alpha stimulation. Interacts with CASP8AP2/FLASH. Interacts with NFATC2IP; the interaction may repress IL-4 production in T cells. Interacts with kinase CDK9. Interacts with sphingosine kinase 1 SPHK1. Interacts with kinase TNIK. Interacts with TRAFD1. Interacts with DNA phosphodiesterase TDP2. Interacts with MAVS/IPS1. Interacts with CARD14. Interacts with Epstein-Barr virus LMP1/BNFL1. Interacts with GPS2. Interacts with XPNPEP3. Interacts with RIPK3. Interacts with RELL2. Interacts with LRRC19. Interacts with GAPDH; promoting TRAF2 ubiquitination. Phosphorylated at several serine residues within the first 128 amino acid residues. Phosphorylated at Thr-117 in response to signaling via TNF and TNFRSF1A. Phosphorylation at Thr-117 is required for 'Lys-63'-linked polyubiquitination, but not for 'Lys-48'-linked polyubiquitination. Phosphorylation at Thr-117 is important for interaction with IKKA and IKKB, activation of IKK and subsequent activation of NF-kappa-B. In terms of processing, undergoes both 'Lys-48'-linked and 'Lys-63'-linked polyubiquitination. Polyubiquitinated via 'Lys-63'-linked ubiquitin in response to TNF signaling; this requires prior phosphorylation at Thr-117. 'Lys-63'-linked polyubiquitination promotes TRAF2-mediated activation of NF-kappa-B. Can be polyubiquitinated at several Lys residues via 'Lys-48'-linked ubiquitin chains in response to TNF signaling, leading to proteasomal degradation. Autoubiquitinated, leading to its subsequent proteasomal degradation. Polyubiquitinated by BIRC2 and SIAH2, leading to its subsequent proteasomal degradation. Deubiquitinated by CYLD, a protease that specifically cleaves 'Lys-63'-linked polyubiquitin chains. Ubiquination is inhibited by LRRC19; inhibits proteasomal degradation. Ubiquitinated at Lys-320 by the SCF(FBXL2) complex, leading to its degradation by the proteasome. Ubiquitinated by E3 ubiquitin-protein ligase complex containing FBXO7; leading to repression of NF-kappa-B signaling.

The protein resides in the cytoplasm. It catalyses the reaction S-ubiquitinyl-[E2 ubiquitin-conjugating enzyme]-L-cysteine + [acceptor protein]-L-lysine = [E2 ubiquitin-conjugating enzyme]-L-cysteine + N(6)-ubiquitinyl-[acceptor protein]-L-lysine.. The protein operates within protein modification; protein ubiquitination. With respect to regulation, has very low E3 ubiquitin ligase activity in the absence of sphingosine-1-phosphate. E3 ubiquitin ligase activity is strongly activated by cytoplasmic sphingosine-1-phosphate. In terms of biological role, E3 ubiquitin-protein ligase that regulates activation of NF-kappa-B and JNK and plays a central role in the regulation of cell survival and apoptosis. Catalyzes 'Lys-63'-linked ubiquitination of target proteins, such as BIRC3, IKBKE, MLST8, RIPK1 and TICAM1. Is an essential constituent of several E3 ubiquitin-protein ligase complexes, where it promotes the ubiquitination of target proteins by bringing them into contact with other E3 ubiquitin ligases. Regulates BIRC2 and BIRC3 protein levels by inhibiting their autoubiquitination and subsequent degradation; this does not depend on the TRAF2 RING-type zinc finger domain. Plays a role in mediating activation of NF-kappa-B by EIF2AK2/PKR. In complex with BIRC2 or BIRC3, promotes ubiquitination of IKBKE. Acts as a regulator of mTORC1 and mTORC2 assembly by mediating 'Lys-63'-linked ubiquitination of MLST8, thereby inhibiting formation of the mTORC2 complex, while facilitating assembly of the mTORC1 complex. Required for normal antibody isotype switching from IgM to IgG. This is TNF receptor-associated factor 2 from Homo sapiens (Human).